A 196-amino-acid polypeptide reads, in one-letter code: 3-isopropylmalate dehydratase small subunit (196 aa).

It belongs to the LeuD family. LeuD type 1 subfamily. Heterodimer of LeuC and LeuD.

It carries out the reaction (2R,3S)-3-isopropylmalate = (2S)-2-isopropylmalate. Its pathway is amino-acid biosynthesis; L-leucine biosynthesis; L-leucine from 3-methyl-2-oxobutanoate: step 2/4. In terms of biological role, catalyzes the isomerization between 2-isopropylmalate and 3-isopropylmalate, via the formation of 2-isopropylmaleate. This is 3-isopropylmalate dehydratase small subunit from Corynebacterium diphtheriae (strain ATCC 700971 / NCTC 13129 / Biotype gravis).